We begin with the raw amino-acid sequence, 377 residues long: ATP-dependent (S)-NAD(P)H-hydrate dehydratase (377 aa).

The YjeF C-terminal domain occupies 10 to 366 (LLHLSRQLIQ…EYLHESFTEL (357 aa)). Residues glycine 148 and 201 to 207 (NVVEFQR) contribute to the (6S)-NADPHX site. ATP-binding positions include 245–249 (KGEHD) and 264–273 (GSNKRVGGQG). Residue aspartate 274 coordinates (6S)-NADPHX.

Belongs to the NnrD/CARKD family. Requires Mg(2+) as cofactor.

It localises to the cytoplasm. The enzyme catalyses (6S)-NADHX + ATP = ADP + phosphate + NADH + H(+). It carries out the reaction (6S)-NADPHX + ATP = ADP + phosphate + NADPH + H(+). In terms of biological role, catalyzes the dehydration of the S-form of NAD(P)HX at the expense of ATP, which is converted to ADP. Together with NAD(P)HX epimerase, which catalyzes the epimerization of the S- and R-forms, the enzyme allows the repair of both epimers of NAD(P)HX, a damaged form of NAD(P)H that is a result of enzymatic or heat-dependent hydration. The protein is ATP-dependent (S)-NAD(P)H-hydrate dehydratase of Candida albicans (strain SC5314 / ATCC MYA-2876) (Yeast).